A 163-amino-acid chain; its full sequence is NADH-quinone oxidoreductase subunit I (163 aa).

4Fe-4S ferredoxin-type domains are found at residues 53–83 (LRRY…IEAG) and 94–123 (VRYD…EGPN). [4Fe-4S] cluster contacts are provided by cysteine 63, cysteine 66, cysteine 69, cysteine 73, cysteine 103, cysteine 106, cysteine 109, and cysteine 113.

This sequence belongs to the complex I 23 kDa subunit family. As to quaternary structure, NDH-1 is composed of 14 different subunits. Subunits NuoA, H, J, K, L, M, N constitute the membrane sector of the complex. It depends on [4Fe-4S] cluster as a cofactor.

Its subcellular location is the cell inner membrane. The enzyme catalyses a quinone + NADH + 5 H(+)(in) = a quinol + NAD(+) + 4 H(+)(out). Its function is as follows. NDH-1 shuttles electrons from NADH, via FMN and iron-sulfur (Fe-S) centers, to quinones in the respiratory chain. The immediate electron acceptor for the enzyme in this species is believed to be ubiquinone. Couples the redox reaction to proton translocation (for every two electrons transferred, four hydrogen ions are translocated across the cytoplasmic membrane), and thus conserves the redox energy in a proton gradient. This chain is NADH-quinone oxidoreductase subunit I, found in Chelativorans sp. (strain BNC1).